Consider the following 324-residue polypeptide: [Acyl-carrier-protein] phosphodiesterase PptH (324 aa).

Positions 22, 24, and 51 each coordinate Mn(2+). Fe cation is bound by residues Asp51, Asn79, His205, and His246. Mn(2+) is bound at residue His248.

The protein belongs to the metallophosphoesterase superfamily. Fe(3+) serves as cofactor. Mn(2+) is required as a cofactor.

It carries out the reaction holo-[ACP] + H2O = apo-[ACP] + (R)-4'-phosphopantetheine + H(+). Functionally, catalyzes the hydrolysis of the phosphopantetheine group from substrate holo-carrier proteins. The protein is [Acyl-carrier-protein] phosphodiesterase PptH of Mycobacterium tuberculosis (strain ATCC 25618 / H37Rv).